The primary structure comprises 542 residues: MTKSNGEEARLGGRMERFQQGVRKRTLLAKKKVQNITKEDVKSYLFRNAFVLLTVTAVIVGTILGFTLRPYRMSYREVKYFSFPGELLMRMLQMLVLPLIISSLVTGMAALDSKASGKMGMRAVVYYMTTTIIAVVIGIIIVIIIHPGKGTKENMHREGKIVQVTAADAFLDLIRNMFPPNLVEACFKQFKTNYEKRSFKVPIQPNETLVGAVINNVSEAMETLTRITEELVPVPGSVNGVNALGLVVFSMCFGFVIGNMKEQGQALREFFDSLNEAIMRLVAVIMWYAPLGILFLIAGKIVEMEDMGVIGGQLAMYTVTVIVGLLIHAVIVLPLLYFLVTRKNPWVFIGGLLQALITALGTSSSSATLPITFKCLEENNGVDKRVTRFVLPVGATINMDGTALYEALAAIFIAQVNNFELNFGQIITISITATAASIGAAGIPQAGLVTMVIVLTSVGLPTDDITLIIAVDWFLDRLRTTTNVLGDSLGAGIVEHLSRHELKNRDVEMGNSVIEENEMKKPYQLISQESEIEKSMDSETKM.

Residues 1-47 (MTKSNGEEARLGGRMERFQQGVRKRTLLAKKKVQNITKEDVKSYLFR) are Cytoplasmic-facing. Residues 48–68 (NAFVLLTVTAVIVGTILGFTL) form a helical membrane-spanning segment. The Extracellular segment spans residues 69–86 (RPYRMSYREVKYFSFPGE). Residues 87 to 108 (LLMRMLQMLVLPLIISSLVTGM) traverse the membrane as a helical segment. Residues 109-122 (AALDSKASGKMGMR) are Cytoplasmic-facing. Residues 123–145 (AVVYYMTTTIIAVVIGIIIVIII) form a helical membrane-spanning segment. At 146-236 (HPGKGTKENM…ITEELVPVPG (91 aa)) the chain is on the extracellular side. Residues 237 to 260 (SVNGVNALGLVVFSMCFGFVIGNM) form a helical membrane-spanning segment. Residues 261-269 (KEQGQALRE) lie on the Cytoplasmic side of the membrane. A helical membrane pass occupies residues 270-297 (FFDSLNEAIMRLVAVIMWYAPLGILFLI). At 298-318 (AGKIVEMEDMGVIGGQLAMYT) the chain is on the extracellular side. A helical membrane pass occupies residues 319 to 340 (VTVIVGLLIHAVIVLPLLYFLV). Topologically, residues 341–345 (TRKNP) are cytoplasmic. Residues 346-376 (WVFIGGLLQALITALGTSSSSATLPITFKCL) constitute an intramembrane region (discontinuously helical). L-aspartate is bound at residue 363 to 365 (SSS). Topologically, residues 377–385 (EENNGVDKR) are cytoplasmic. The helical transmembrane segment at 386-412 (VTRFVLPVGATINMDGTALYEALAAIF) threads the bilayer. 3 residues coordinate Na(+): glycine 394, threonine 396, and asparagine 398. Threonine 402 provides a ligand contact to L-aspartate. Residues 413–425 (IAQVNNFELNFGQ) lie on the Extracellular side of the membrane. An intramembrane region (discontinuously helical) is located at residues 426-459 (IITISITATAASIGAAGIPQAGLVTMVIVLTSVG). 443–447 (IPQAG) provides a ligand contact to L-aspartate. The Extracellular portion of the chain corresponds to 460–472 (LPTDDITLIIAVD). Residues 473 to 494 (WFLDRLRTTTNVLGDSLGAGIV) traverse the membrane as a helical segment. L-aspartate contacts are provided by aspartate 476 and asparagine 483. Positions 483 and 487 each coordinate Na(+). The Cytoplasmic portion of the chain corresponds to 495-542 (EHLSRHELKNRDVEMGNSVIEENEMKKPYQLISQESEIEKSMDSETKM). Serine 512 is modified (phosphoserine).

It belongs to the dicarboxylate/amino acid:cation symporter (DAACS) (TC 2.A.23) family. SLC1A3 subfamily. Homotrimer. Glycosylated.

The protein localises to the cell membrane. The catalysed reaction is K(+)(in) + L-glutamate(out) + 3 Na(+)(out) + H(+)(out) = K(+)(out) + L-glutamate(in) + 3 Na(+)(in) + H(+)(in). It catalyses the reaction K(+)(in) + L-aspartate(out) + 3 Na(+)(out) + H(+)(out) = K(+)(out) + L-aspartate(in) + 3 Na(+)(in) + H(+)(in). The enzyme catalyses D-aspartate(out) + K(+)(in) + 3 Na(+)(out) + H(+)(out) = D-aspartate(in) + K(+)(out) + 3 Na(+)(in) + H(+)(in). Sodium-dependent, high-affinity amino acid transporter that mediates the uptake of L-glutamate and also L-aspartate and D-aspartate. Functions as a symporter that transports one amino acid molecule together with two or three Na(+) ions and one proton, in parallel with the counter-transport of one K(+) ion. Plays a redundant role in the rapid removal of released glutamate from the synaptic cleft, which is essential for terminating the postsynaptic action of glutamate. The protein is Excitatory amino acid transporter 1 (SLC1A3) of Bos taurus (Bovine).